A 400-amino-acid chain; its full sequence is Opsin-3 (400 aa).

The Extracellular portion of the chain corresponds to Met-1–Ala-38. N-linked (GlcNAc...) asparagine glycosylation is present at Asn-5. Residues Tyr-39–Leu-63 traverse the membrane as a helical segment. Residues Tyr-64–His-75 are Cytoplasmic-facing. A helical transmembrane segment spans residues Leu-76 to Cys-100. Over Leu-101–Asp-115 the chain is Extracellular. Cysteines 112 and 186 form a disulfide. The helical transmembrane segment at Gly-116 to Tyr-135 threads the bilayer. Topologically, residues Glu-136–Trp-151 are cytoplasmic. A helical membrane pass occupies residues Ala-152 to Asn-175. Topologically, residues Arg-176–Ser-199 are extracellular. An N-linked (GlcNAc...) asparagine glycan is attached at Asn-196. A helical membrane pass occupies residues Phe-200–Val-227. Residues Arg-228–Lys-253 are Cytoplasmic-facing. The chain crosses the membrane as a helical span at residues Met-254 to Val-277. Over Asn-278 to Thr-285 the chain is Extracellular. A helical transmembrane segment spans residues Pro-286–Met-310. Lys-297 bears the N6-(retinylidene)lysine mark. Residues Asn-311–Leu-400 lie on the Cytoplasmic side of the membrane. Residue Cys-323 is the site of S-palmitoyl cysteine attachment.

This sequence belongs to the G-protein coupled receptor 1 family. Opsin subfamily. Interacts with MC1R; the interaction results in a decrease in MC1R-mediated cAMP signaling and ultimately a decrease in melanin production in melanocytes. In terms of tissue distribution, expressed in the eye (at protein level). Expressed in tracheal airway smooth muscle. Expressed in brown adipocyte tissue; expression becomes more abundant during differentiation. Strongly expressed in brain. Highly expressed in the preoptic area and paraventricular nucleus of the hypothalamus. Shows highly patterned expression in other regions of the brain, being enriched in selected regions of the cerebral cortex, cerebellar Purkinje cells, a subset of striatal neurons, selected thalamic nuclei, and a subset of interneurons in the ventral horn of the spinal cord.

The protein resides in the cell membrane. It localises to the cytoplasm. Functionally, G-protein coupled receptor which selectively activates G proteins via ultraviolet A (UVA) light-mediated activation in the skin. Binds both 11-cis retinal and all-trans retinal. Regulates melanogenesis in melanocytes via inhibition of alpha-MSH-induced MC1R-mediated cAMP signaling, modulation of calcium flux, regulation of CAMK2 phosphorylation, and subsequently phosphorylation of CREB, p38, ERK and MITF in response to blue light. Plays a role in melanocyte survival through regulation of intracellular calcium levels and subsequent BCL2/RAF1 signaling. Additionally regulates apoptosis via cytochrome c release and subsequent activation of the caspase cascade. Required for TYR and DCT blue light-induced complex formation in melanocytes. Involved in keratinocyte differentiation in response to blue-light. Required for the UVA-mediated induction of calcium and mitogen-activated protein kinase signaling resulting in the expression of MMP1, MMP2, MMP3, MMP9 and TIMP1 in dermal fibroblasts. Plays a role in light-mediated glucose uptake, mitochondrial respiration and fatty acid metabolism in brown adipocyte tissues. May be involved in photorelaxation of airway smooth muscle cells, via blue-light dependent GPCR signaling pathways. The sequence is that of Opsin-3 (Opn3) from Mus musculus (Mouse).